Consider the following 126-residue polypeptide: Glycine cleavage system H protein (126 aa).

Residues 22-104 form the Lipoyl-binding domain; sequence VATIGITEYA…YEKAWMVKVE (83 aa). K63 bears the N6-lipoyllysine mark.

The protein belongs to the GcvH family. In terms of assembly, the glycine cleavage system is composed of four proteins: P, T, L and H. (R)-lipoate is required as a cofactor.

The glycine cleavage system catalyzes the degradation of glycine. The H protein shuttles the methylamine group of glycine from the P protein to the T protein. Functionally, is also involved in protein lipoylation via its role as an octanoyl/lipoyl carrier protein intermediate. This Staphylococcus aureus (strain MSSA476) protein is Glycine cleavage system H protein.